The primary structure comprises 565 residues: Dihydroxy-acid dehydratase (565 aa).

Asp83 contributes to the Mg(2+) binding site. Cys124 contacts [2Fe-2S] cluster. Mg(2+) is bound by residues Asp125 and Lys126. At Lys126 the chain carries N6-carboxylysine. Cys197 contacts [2Fe-2S] cluster. Glu451 is a Mg(2+) binding site. Ser477 functions as the Proton acceptor in the catalytic mechanism.

This sequence belongs to the IlvD/Edd family. As to quaternary structure, homodimer. [2Fe-2S] cluster is required as a cofactor. It depends on Mg(2+) as a cofactor.

The catalysed reaction is (2R)-2,3-dihydroxy-3-methylbutanoate = 3-methyl-2-oxobutanoate + H2O. It carries out the reaction (2R,3R)-2,3-dihydroxy-3-methylpentanoate = (S)-3-methyl-2-oxopentanoate + H2O. The protein operates within amino-acid biosynthesis; L-isoleucine biosynthesis; L-isoleucine from 2-oxobutanoate: step 3/4. Its pathway is amino-acid biosynthesis; L-valine biosynthesis; L-valine from pyruvate: step 3/4. Its function is as follows. Functions in the biosynthesis of branched-chain amino acids. Catalyzes the dehydration of (2R,3R)-2,3-dihydroxy-3-methylpentanoate (2,3-dihydroxy-3-methylvalerate) into 2-oxo-3-methylpentanoate (2-oxo-3-methylvalerate) and of (2R)-2,3-dihydroxy-3-methylbutanoate (2,3-dihydroxyisovalerate) into 2-oxo-3-methylbutanoate (2-oxoisovalerate), the penultimate precursor to L-isoleucine and L-valine, respectively. This chain is Dihydroxy-acid dehydratase, found in Symbiobacterium thermophilum (strain DSM 24528 / JCM 14929 / IAM 14863 / T).